The chain runs to 467 residues: uncharacterized protein (467 aa).

Residues 416-467 (KQQRAQTAVVGTTKELVSKATHMKPPRTPPGEAEHRKRSQSLAICQWNKNSR) form a disordered region. A compositionally biased stretch (polar residues) spans 455–467 (QSLAICQWNKNSR).

This is an uncharacterized protein from Homo sapiens (Human).